The following is a 98-amino-acid chain: NADH-ubiquinone oxidoreductase chain 4L (98 aa).

3 helical membrane passes run 1–21 (MPFI…GLLI), 29–49 (SLLC…LMTL), and 61–81 (IVLL…LVLI).

This sequence belongs to the complex I subunit 4L family. As to quaternary structure, core subunit of respiratory chain NADH dehydrogenase (Complex I) which is composed of 45 different subunits.

Its subcellular location is the mitochondrion inner membrane. The enzyme catalyses a ubiquinone + NADH + 5 H(+)(in) = a ubiquinol + NAD(+) + 4 H(+)(out). Core subunit of the mitochondrial membrane respiratory chain NADH dehydrogenase (Complex I) which catalyzes electron transfer from NADH through the respiratory chain, using ubiquinone as an electron acceptor. Part of the enzyme membrane arm which is embedded in the lipid bilayer and involved in proton translocation. The protein is NADH-ubiquinone oxidoreductase chain 4L (MT-ND4L) of Aotus trivirgatus (Three-striped night monkey).